We begin with the raw amino-acid sequence, 776 residues long: Protein FAM83C (776 aa).

A DUF1669 region spans residues 1 to 340 (MQGCQAGASI…LYAESQPVEG (340 aa)). 5 disordered regions span residues 344–467 (NEDP…STSP), 494–565 (SRLP…SLQH), 617–653 (HGQL…DDRR), 669–694 (PFRS…VGSA), and 716–745 (QGAR…LFAP). Residues 368 to 385 (SATGSSPSSNSLSSIKHS) are compositionally biased toward low complexity. Residues 452-467 (PWSQSSPALNHSSTSP) show a composition bias toward polar residues. The span at 523–539 (VEEKKVSLSQSHDHLDR) shows a compositional bias: basic and acidic residues. The segment covering 554–563 (SRVTPDSSSL) has biased composition (polar residues).

Belongs to the FAM83 family. In terms of assembly, directly interacts (via DUF1669) with CSNK1A1 and CSNK1A1L. May interact with RAF1. Phosphorylated by CSNK1A1.

The protein localises to the cytoplasm. Its function is as follows. May play a role in MAPK signaling. The polypeptide is Protein FAM83C (Mus musculus (Mouse)).